The chain runs to 314 residues: Aspartate carbamoyltransferase catalytic subunit (314 aa).

R58 and T59 together coordinate carbamoyl phosphate. Position 86 (K86) interacts with L-aspartate. Residues R108, H136, and Q139 each coordinate carbamoyl phosphate. L-aspartate contacts are provided by R169 and R223. Carbamoyl phosphate-binding residues include G264 and P265.

It belongs to the aspartate/ornithine carbamoyltransferase superfamily. ATCase family. Heterododecamer (2C3:3R2) of six catalytic PyrB chains organized as two trimers (C3), and six regulatory PyrI chains organized as three dimers (R2).

It carries out the reaction carbamoyl phosphate + L-aspartate = N-carbamoyl-L-aspartate + phosphate + H(+). Its pathway is pyrimidine metabolism; UMP biosynthesis via de novo pathway; (S)-dihydroorotate from bicarbonate: step 2/3. Its function is as follows. Catalyzes the condensation of carbamoyl phosphate and aspartate to form carbamoyl aspartate and inorganic phosphate, the committed step in the de novo pyrimidine nucleotide biosynthesis pathway. The sequence is that of Aspartate carbamoyltransferase catalytic subunit from Jannaschia sp. (strain CCS1).